A 427-amino-acid polypeptide reads, in one-letter code: Glutamate-1-semialdehyde 2,1-aminomutase 2 (427 aa).

An N6-(pyridoxal phosphate)lysine modification is found at lysine 267.

This sequence belongs to the class-III pyridoxal-phosphate-dependent aminotransferase family. HemL subfamily. In terms of assembly, homodimer. It depends on pyridoxal 5'-phosphate as a cofactor.

It is found in the cytoplasm. It carries out the reaction (S)-4-amino-5-oxopentanoate = 5-aminolevulinate. It participates in porphyrin-containing compound metabolism; protoporphyrin-IX biosynthesis; 5-aminolevulinate from L-glutamyl-tRNA(Glu): step 2/2. This Staphylococcus saprophyticus subsp. saprophyticus (strain ATCC 15305 / DSM 20229 / NCIMB 8711 / NCTC 7292 / S-41) protein is Glutamate-1-semialdehyde 2,1-aminomutase 2.